The primary structure comprises 452 residues: Trigger factor (452 aa).

Positions 170–255 (GDRVTIDFTG…VKSVAAPGPL (86 aa)) constitute a PPIase FKBP-type domain.

The protein belongs to the FKBP-type PPIase family. Tig subfamily.

It is found in the cytoplasm. It catalyses the reaction [protein]-peptidylproline (omega=180) = [protein]-peptidylproline (omega=0). Functionally, involved in protein export. Acts as a chaperone by maintaining the newly synthesized protein in an open conformation. Functions as a peptidyl-prolyl cis-trans isomerase. The protein is Trigger factor of Xanthobacter autotrophicus (strain ATCC BAA-1158 / Py2).